The chain runs to 180 residues: Large ribosomal subunit protein uL5 (180 aa).

The protein belongs to the universal ribosomal protein uL5 family. Part of the 50S ribosomal subunit; part of the 5S rRNA/L5/L18/L25 subcomplex. Contacts the 5S rRNA and the P site tRNA. Forms a bridge to the 30S subunit in the 70S ribosome.

Its function is as follows. This is one of the proteins that bind and probably mediate the attachment of the 5S RNA into the large ribosomal subunit, where it forms part of the central protuberance. In the 70S ribosome it contacts protein S13 of the 30S subunit (bridge B1b), connecting the 2 subunits; this bridge is implicated in subunit movement. Contacts the P site tRNA; the 5S rRNA and some of its associated proteins might help stabilize positioning of ribosome-bound tRNAs. This is Large ribosomal subunit protein uL5 from Streptococcus equi subsp. equi (strain 4047).